A 299-amino-acid chain; its full sequence is Bifunctional protein FolD (299 aa).

Residues 166–168, S191, and I232 contribute to the NADP(+) site; that span reads GRS.

The protein belongs to the tetrahydrofolate dehydrogenase/cyclohydrolase family. In terms of assembly, homodimer.

The enzyme catalyses (6R)-5,10-methylene-5,6,7,8-tetrahydrofolate + NADP(+) = (6R)-5,10-methenyltetrahydrofolate + NADPH. It carries out the reaction (6R)-5,10-methenyltetrahydrofolate + H2O = (6R)-10-formyltetrahydrofolate + H(+). It participates in one-carbon metabolism; tetrahydrofolate interconversion. Functionally, catalyzes the oxidation of 5,10-methylenetetrahydrofolate to 5,10-methenyltetrahydrofolate and then the hydrolysis of 5,10-methenyltetrahydrofolate to 10-formyltetrahydrofolate. The chain is Bifunctional protein FolD from Dinoroseobacter shibae (strain DSM 16493 / NCIMB 14021 / DFL 12).